We begin with the raw amino-acid sequence, 151 residues long: FAD synthase (151 aa).

ATP contacts are provided by residues 9-10 (TF), 14-17 (HPGH), aspartate 96, and tyrosine 123.

This sequence belongs to the archaeal FAD synthase family. In terms of assembly, homodimer. A divalent metal cation serves as cofactor.

The catalysed reaction is FMN + ATP + H(+) = FAD + diphosphate. The protein operates within cofactor biosynthesis; FAD biosynthesis; FAD from FMN: step 1/1. Functionally, catalyzes the transfer of the AMP portion of ATP to flavin mononucleotide (FMN) to produce flavin adenine dinucleotide (FAD) coenzyme. This Methanothermobacter thermautotrophicus (strain ATCC 29096 / DSM 1053 / JCM 10044 / NBRC 100330 / Delta H) (Methanobacterium thermoautotrophicum) protein is FAD synthase.